The primary structure comprises 177 residues: Crossover junction endodeoxyribonuclease RuvC (177 aa).

Active-site residues include Asp-7, Glu-68, and Asp-141. Asp-7, Glu-68, and Asp-141 together coordinate Mg(2+).

Belongs to the RuvC family. As to quaternary structure, homodimer which binds Holliday junction (HJ) DNA. The HJ becomes 2-fold symmetrical on binding to RuvC with unstacked arms; it has a different conformation from HJ DNA in complex with RuvA. In the full resolvosome a probable DNA-RuvA(4)-RuvB(12)-RuvC(2) complex forms which resolves the HJ. Requires Mg(2+) as cofactor.

The protein localises to the cytoplasm. It catalyses the reaction Endonucleolytic cleavage at a junction such as a reciprocal single-stranded crossover between two homologous DNA duplexes (Holliday junction).. The RuvA-RuvB-RuvC complex processes Holliday junction (HJ) DNA during genetic recombination and DNA repair. Endonuclease that resolves HJ intermediates. Cleaves cruciform DNA by making single-stranded nicks across the HJ at symmetrical positions within the homologous arms, yielding a 5'-phosphate and a 3'-hydroxyl group; requires a central core of homology in the junction. The consensus cleavage sequence is 5'-(A/T)TT(C/G)-3'. Cleavage occurs on the 3'-side of the TT dinucleotide at the point of strand exchange. HJ branch migration catalyzed by RuvA-RuvB allows RuvC to scan DNA until it finds its consensus sequence, where it cleaves and resolves the cruciform DNA. In Nocardioides sp. (strain ATCC BAA-499 / JS614), this protein is Crossover junction endodeoxyribonuclease RuvC.